The following is a 652-amino-acid chain: Acetyl-coenzyme A synthetase (652 aa).

CoA contacts are provided by residues 191–194, T311, and N335; that span reads RAGR. ATP is bound by residues 387-389, 411-416, D500, and R515; these read GEP and DTWWQT. Position 523 (S523) interacts with CoA. R526 serves as a coordination point for ATP. 3 residues coordinate Mg(2+): V537, H539, and I542. R584 contacts CoA. K609 is modified (N6-acetyllysine; by Pat).

Belongs to the ATP-dependent AMP-binding enzyme family. Monomer. Requires Mg(2+) as cofactor. In terms of processing, acetylated. Deacetylation by the SIR2-homolog deacetylase activates the enzyme.

The enzyme catalyses acetate + ATP + CoA = acetyl-CoA + AMP + diphosphate. Its function is as follows. Catalyzes the conversion of acetate into acetyl-CoA (AcCoA), an essential intermediate at the junction of anabolic and catabolic pathways. Acs undergoes a two-step reaction. In the first half reaction, Acs combines acetate with ATP to form acetyl-adenylate (AcAMP) intermediate. In the second half reaction, it can then transfer the acetyl group from AcAMP to the sulfhydryl group of CoA, forming the product AcCoA. Required for acetate recapture but not for acetate excretion when this organism is grown on ethanolamine. Enables the cell to use acetate during aerobic growth to generate energy via the TCA cycle, and biosynthetic compounds via the glyoxylate shunt. Acetylates CheY, the response regulator involved in flagellar movement and chemotaxis. In Salmonella typhimurium (strain LT2 / SGSC1412 / ATCC 700720), this protein is Acetyl-coenzyme A synthetase.